The chain runs to 194 residues: Holliday junction branch migration complex subunit RuvA (194 aa).

The segment at 1–64 is domain I; that stretch reads MIGRLRGVLT…DDSAALYGFL (64 aa). Residues 65–140 form a domain II region; that stretch reads SESERRLFRH…RAADFNNGIS (76 aa). A flexible linker region spans residues 140-144; that stretch reads STSGK. A domain III region spans residues 145–194; it reads LNLDTVSEAALALQQLGYKPAEAARMARDAGTESDDVAIVIKKALQTVLR.

This sequence belongs to the RuvA family. In terms of assembly, homotetramer. Forms an RuvA(8)-RuvB(12)-Holliday junction (HJ) complex. HJ DNA is sandwiched between 2 RuvA tetramers; dsDNA enters through RuvA and exits via RuvB. An RuvB hexamer assembles on each DNA strand where it exits the tetramer. Each RuvB hexamer is contacted by two RuvA subunits (via domain III) on 2 adjacent RuvB subunits; this complex drives branch migration. In the full resolvosome a probable DNA-RuvA(4)-RuvB(12)-RuvC(2) complex forms which resolves the HJ.

The protein resides in the cytoplasm. Its function is as follows. The RuvA-RuvB-RuvC complex processes Holliday junction (HJ) DNA during genetic recombination and DNA repair, while the RuvA-RuvB complex plays an important role in the rescue of blocked DNA replication forks via replication fork reversal (RFR). RuvA specifically binds to HJ cruciform DNA, conferring on it an open structure. The RuvB hexamer acts as an ATP-dependent pump, pulling dsDNA into and through the RuvAB complex. HJ branch migration allows RuvC to scan DNA until it finds its consensus sequence, where it cleaves and resolves the cruciform DNA. This chain is Holliday junction branch migration complex subunit RuvA, found in Xylella fastidiosa (strain M23).